Reading from the N-terminus, the 674-residue chain is Protein asunder (674 aa).

The stretch at 516–538 forms a coiled coil; sequence HKAKDQYRLLYRELEQLIQLNAS. The Nuclear localization signal (NLS) signature appears at 601 to 607; it reads LKASKRR.

Belongs to the Integrator subunit 13 family. In terms of assembly, belongs to the multiprotein complex Integrator, at least composed of IntS1, IntS2, IntS3, IntS4, omd/IntS5, IntS6, defl/IntS7, IntS8, IntS9, IntS10, IntS11, IntS12, asun/IntS13, IntS14 and IntS15. The core complex associates with protein phosphatase 2A subunits mts/PP2A and Pp2A-29B, to form the Integrator-PP2A (INTAC) complex. In terms of processing, phosphorylated.

The protein resides in the nucleus. It localises to the cytoplasm. It is found in the perinuclear region. In terms of biological role, component of the integrator complex, a multiprotein complex that terminates RNA polymerase II (Pol II) transcription in the promoter-proximal region of genes. The integrator complex provides a quality checkpoint during transcription elongation by driving premature transcription termination of transcripts that are unfavorably configured for transcriptional elongation: the complex terminates transcription by (1) catalyzing dephosphorylation of the C-terminal domain (CTD) of Pol II subunit Polr2A/Rbp1 and Spt5, and (2) degrading the exiting nascent RNA transcript via endonuclease activity. The integrator complex is also involved in the 3'-end processing of the U7 snRNA, and also the spliceosomal snRNAs U1, U2, U4 and U5. In Drosophila persimilis (Fruit fly), this protein is Protein asunder (asun).